We begin with the raw amino-acid sequence, 207 residues long: Ras-related protein Rab-8A (207 aa).

Residues Ser-17, Gly-18, Val-19, Gly-20, Lys-21, Thr-22, Cys-23, Ser-35, Ser-39, and Thr-40 each contribute to the GTP site. Residue Thr-22 participates in Mg(2+) binding. Short sequence motifs (switch) lie at residues 31–45 (DAFN…GIDF) and 63–80 (DTAG…YYRG). Positions 40 and 63 each coordinate Mg(2+). A GTP-binding site is contributed by Gly-66. Thr-72 carries the phosphothreonine modification. GTP contacts are provided by Asn-121, Lys-122, Asp-124, Ala-152, and Lys-153. Phosphoserine is present on residues Ser-181 and Ser-185. A Cysteine methyl ester modification is found at Cys-204. Cys-204 carries S-geranylgeranyl cysteine lipidation. The propeptide at 205–207 (VLL) is removed in mature form.

The protein belongs to the small GTPase superfamily. Rab family. In terms of assembly, interacts (GTP-bound form) with MICALL1; regulates RAB8A association with recycling endosomes. Interacts with MICALL2; competes with RAB13 and is involved in E-cadherin endocytic recycling. Interacts (GTP-bound form) with MICAL1, MICALCL, MICAL3, EHBP1 and EHBP1L1; at least in case of MICAL1, MICALCL, MICAL3 and EHBP1L1 two molecules of RAB8A can bind to one molecule of the effector protein; ternary complexes of RAB8A, RAB13 and either MICAL1 or EHBP1L1 are possible. Interacts with EHD1. Interacts with MAP4K2 and SYTL4. Interacts with SGSM1 and SGSM3. Interacts with RABIF, RIMS2, RPH3A and RPH3A. Interacts with OPTN. Interacts with RAB3IP, RAB3IP functions as guanine exchange factor (GEF). Interacts with MYO5B. Interacts with CIMAP3. Interacts with BIRC6/bruce. Interacts with OCRL. Interacts with AHI1. Interacts with DCDC1. Interacts with LRRK2; interaction facilitates phosphorylation of Thr-72. Interacts with RAB31P, GDI1, GDI2, CHM, CHML, RABGGTA, RABGGTB, TBC1D15 and INPP5B; these interactions are dependent on Thr-72 not being phosphorylated. Interacts with RILPL1 and RILPL2; these interactions are dependent on the phosphorylation of Thr-72 by LRRK2. Interacts with DZIP1; prevents inhibition by the GDP-dissociation inhibitor GDI2. Interacts (in GDP-bound form) with RAB3IP/Rabin8, RAB3IP functions as guanine exchange factor (GEF) towards RAB8A. Interacts (in GDP-bound form) with RPGR, RPGR functions as GEF towards RAB8A. Mg(2+) is required as a cofactor. In terms of processing, phosphorylation of Thr-72 in the switch II region by LRRK2 prevents the association of RAB regulatory proteins, including CHM, CHML and RAB GDP dissociation inhibitors GDI1 and GDI2. Phosphorylation by LRRK2 is required for localization to stressed lysosomes.

The protein resides in the cell membrane. The protein localises to the golgi apparatus. It localises to the endosome membrane. It is found in the recycling endosome membrane. Its subcellular location is the cell projection. The protein resides in the cilium. The protein localises to the cytoplasmic vesicle. It localises to the phagosome membrane. It is found in the cytoplasm. Its subcellular location is the cytoskeleton. The protein resides in the microtubule organizing center. The protein localises to the centrosome. It localises to the centriole. It is found in the cilium basal body. Its subcellular location is the midbody. The protein resides in the lysosome. The enzyme catalyses GTP + H2O = GDP + phosphate + H(+). With respect to regulation, regulated by guanine nucleotide exchange factors (GEFs) such as RAB3IP/Rabin8 and RPGR which promote the exchange of bound GDP for free GTP, GTPase activating proteins (GAPs) which increase the GTP hydrolysis activity, and GDP dissociation inhibitors (GDIs) which inhibit the dissociation of the nucleotide from the GTPase. Activated in response to insulin. In terms of biological role, the small GTPases Rab are key regulators of intracellular membrane trafficking, from the formation of transport vesicles to their fusion with membranes. Rabs cycle between an inactive GDP-bound form and an active GTP-bound form that is able to recruit to membranes different sets of downstream effectors directly responsible for vesicle formation, movement, tethering and fusion. RAB8A is involved in polarized vesicular trafficking and neurotransmitter release. Together with RAB11A, RAB3IP, the exocyst complex, PARD3, PRKCI, ANXA2, CDC42 and DNMBP promotes transcytosis of PODXL to the apical membrane initiation sites (AMIS), apical surface formation and lumenogenesis. Regulates the compacted morphology of the Golgi. Together with MYO5B and RAB11A participates in epithelial cell polarization. Also involved in membrane trafficking to the cilium and ciliogenesis. Together with MICALL2, may also regulate adherens junction assembly. May play a role in insulin-induced transport to the plasma membrane of the glucose transporter GLUT4 and therefore play a role in glucose homeostasis. Involved in autophagy. Participates in the export of a subset of neosynthesized proteins through a Rab8-Rab10-Rab11-dependent endososomal export route. Targeted to and stabilized on stressed lysosomes through LRRK2 phosphorylation. Suppresses stress-induced lysosomal enlargement through EHBP1 and EHNP1L1 effector proteins. This is Ras-related protein Rab-8A (RAB8A) from Bos taurus (Bovine).